Here is a 196-residue protein sequence, read N- to C-terminus: Nodulation protein A (196 aa).

It belongs to the NodA family.

It localises to the cytoplasm. Functionally, N-acyltransferase required for nodulation. Acts in the production of a small, heat-stable compound (Nod) that stimulates mitosis in various plant protoplasts. In Mesorhizobium sp. (strain 7653R), this protein is Nodulation protein A.